Reading from the N-terminus, the 89-residue chain is Small ribosomal subunit protein uS15 (89 aa).

Belongs to the universal ribosomal protein uS15 family. Part of the 30S ribosomal subunit. Forms a bridge to the 50S subunit in the 70S ribosome, contacting the 23S rRNA.

One of the primary rRNA binding proteins, it binds directly to 16S rRNA where it helps nucleate assembly of the platform of the 30S subunit by binding and bridging several RNA helices of the 16S rRNA. In terms of biological role, forms an intersubunit bridge (bridge B4) with the 23S rRNA of the 50S subunit in the ribosome. This Corynebacterium glutamicum (strain R) protein is Small ribosomal subunit protein uS15.